Consider the following 458-residue polypeptide: Zinc finger protein 239 (458 aa).

Lysine 108 participates in a covalent cross-link: Glycyl lysine isopeptide (Lys-Gly) (interchain with G-Cter in SUMO2). Serine 191 carries the phosphoserine modification. 9 C2H2-type zinc fingers span residues 207-229, 235-257, 263-285, 291-313, 319-341, 347-369, 375-397, 403-425, and 431-453; these read YECSQCGKNFSQSSELLLHQRDH, YKCEQCGKGFTRSSSLLIHQAVH, YKCDKCGKGFTRSSSLLIHHAVH, YKCDKCGKGFSQSSKLHIHQRVH, YECEECGMSFSQRSNLHIHQRVH, YKCGECGKGFSQSSNLHIHRCIH, YQCYECGKGFSQSSDLRIHLRVH, YHCGKCGKGFSQSSKLLIHQRVH, and YECSKCGKGFSQSSNLHIHQRVH.

It belongs to the krueppel C2H2-type zinc-finger protein family.

It localises to the nucleus. Functionally, may be involved in transcriptional regulation. The chain is Zinc finger protein 239 (ZNF239) from Homo sapiens (Human).